Consider the following 90-residue polypeptide: UPF0235 protein CPn_0497/CP_0257/CPj0497/CpB0517 (90 aa).

Belongs to the UPF0235 family.

This Chlamydia pneumoniae (Chlamydophila pneumoniae) protein is UPF0235 protein CPn_0497/CP_0257/CPj0497/CpB0517.